The following is a 543-amino-acid chain: Allantoate permease (543 aa).

Residues 1–80 lie on the Cytoplasmic side of the membrane; that stretch reads MSADASTNSN…PEEDRKLRWK (80 aa). A helical membrane pass occupies residues 81–97; sequence IDYCMFPLMCILYAVQF. The Extracellular segment spans residues 98–123; sequence MDKISTSSAAVMGLRTDLKMHGDQYS. Residues 124-145 form a helical membrane-spanning segment; sequence WVTSAFYFGYLFMNLGPVQFIF. At 146–154 the chain is on the cytoplasmic side; the sequence is QRTSHMSKM. A helical transmembrane segment spans residues 155–171; it reads LAVFIVIWGMLLALHAA. Over 172–178 the chain is Extracellular; it reads PTVKYPS. Residues 179–200 traverse the membrane as a helical segment; the sequence is FIVLRVLLGCAESVVTPCFTII. The Cytoplasmic segment spans residues 201 to 213; that stretch reads TAQYWKTEEQFTR. The chain crosses the membrane as a helical span at residues 214-237; sequence VSIWFGMNGLGSILINAIAYGVYI. Over 238–248 the chain is Extracellular; sequence HQDSYAIKGWR. The chain crosses the membrane as a helical span at residues 249 to 269; the sequence is TLFVITGVITIFIGILIFLWI. At 270-317 the chain is on the cytoplasmic side; sequence PDDPSKARFLSKREKLMVVQRIRSNQQGFGNHEIKKYQIIEALKDVRT. A helical transmembrane segment spans residues 318 to 342; it reads WLYFLFTVSSNIPNGGISSFMSILL. Residues 343-352 are Extracellular-facing; sequence NSDFGYSSKE. The helical transmembrane segment at 353-377 threads the bilayer; sequence TLLMGLPTGAVELVGCPLFGILAVY. Over 378–389 the chain is Cytoplasmic; that stretch reads AANKKIPFWKYK. The chain crosses the membrane as a helical span at residues 390 to 411; the sequence is LSWAIFAAVLALIASCMLGFAT. Residues 412–417 are Extracellular-facing; the sequence is NSKKAR. Residues 418-435 traverse the membrane as a helical segment; sequence LAGAYLWYISPVSFICVL. At 436-453 the chain is on the cytoplasmic side; the sequence is SNISANSSGYSKKWTVSS. The chain crosses the membrane as a helical span at residues 454-472; the sequence is INLVAYAAANLAGPQTFIA. Over 473 to 482 the chain is Extracellular; sequence KQAPKYHGAK. A helical membrane pass occupies residues 483–504; sequence VAMVVCYAVMIVLLSILLIVNL. The Cytoplasmic segment spans residues 505 to 543; sequence RENKRRDKIAAERGFPEETENLEFSDLTDFENPNFRYTL.

This sequence belongs to the major facilitator superfamily. Allantoate permease family.

It is found in the membrane. Component of the allantoate transport system. The chain is Allantoate permease (DAL5) from Saccharomyces cerevisiae (strain ATCC 204508 / S288c) (Baker's yeast).